The chain runs to 275 residues: Dermonecrotic toxin SpeSicTox-betaIIA2v (275 aa).

The active site involves histidine 5. 2 residues coordinate Mg(2+): glutamate 25 and aspartate 27. The active-site Nucleophile is the histidine 41. Intrachain disulfides connect cysteine 45–cysteine 51 and cysteine 47–cysteine 190. Mg(2+) is bound at residue aspartate 85.

It belongs to the arthropod phospholipase D family. Class II subfamily. Mg(2+) is required as a cofactor. As to expression, expressed by the venom gland.

The protein localises to the secreted. It catalyses the reaction an N-(acyl)-sphingosylphosphocholine = an N-(acyl)-sphingosyl-1,3-cyclic phosphate + choline. It carries out the reaction an N-(acyl)-sphingosylphosphoethanolamine = an N-(acyl)-sphingosyl-1,3-cyclic phosphate + ethanolamine. The enzyme catalyses a 1-acyl-sn-glycero-3-phosphocholine = a 1-acyl-sn-glycero-2,3-cyclic phosphate + choline. The catalysed reaction is a 1-acyl-sn-glycero-3-phosphoethanolamine = a 1-acyl-sn-glycero-2,3-cyclic phosphate + ethanolamine. Its function is as follows. Dermonecrotic toxins cleave the phosphodiester linkage between the phosphate and headgroup of certain phospholipids (sphingolipid and lysolipid substrates), forming an alcohol (often choline) and a cyclic phosphate. This toxin acts on sphingomyelin (SM). It may also act on ceramide phosphoethanolamine (CPE), lysophosphatidylcholine (LPC) and lysophosphatidylethanolamine (LPE), but not on lysophosphatidylserine (LPS), and lysophosphatidylglycerol (LPG). It acts by transphosphatidylation, releasing exclusively cyclic phosphate products as second products. Induces dermonecrosis, hemolysis, increased vascular permeability, edema, inflammatory response, and platelet aggregation. The polypeptide is Dermonecrotic toxin SpeSicTox-betaIIA2v (Sicarius peruensis (Six-eyed sand spider)).